Reading from the N-terminus, the 428-residue chain is 3-phosphoshikimate 1-carboxyvinyltransferase (428 aa).

3-phosphoshikimate contacts are provided by Lys-22, Ser-23, and Arg-27. Residue Lys-22 coordinates phosphoenolpyruvate. The phosphoenolpyruvate site is built by Gly-98 and Arg-126. Positions 172, 173, 174, 200, 316, 339, and 343 each coordinate 3-phosphoshikimate. Position 174 (Gln-174) interacts with phosphoenolpyruvate. Asp-316 (proton acceptor) is an active-site residue. Positions 347, 389, and 414 each coordinate phosphoenolpyruvate.

It belongs to the EPSP synthase family. In terms of assembly, monomer.

The protein resides in the cytoplasm. The enzyme catalyses 3-phosphoshikimate + phosphoenolpyruvate = 5-O-(1-carboxyvinyl)-3-phosphoshikimate + phosphate. It participates in metabolic intermediate biosynthesis; chorismate biosynthesis; chorismate from D-erythrose 4-phosphate and phosphoenolpyruvate: step 6/7. In terms of biological role, catalyzes the transfer of the enolpyruvyl moiety of phosphoenolpyruvate (PEP) to the 5-hydroxyl of shikimate-3-phosphate (S3P) to produce enolpyruvyl shikimate-3-phosphate and inorganic phosphate. This is 3-phosphoshikimate 1-carboxyvinyltransferase from Psychromonas ingrahamii (strain DSM 17664 / CCUG 51855 / 37).